A 473-amino-acid chain; its full sequence is tRNA modification GTPase MnmE (473 aa).

Positions 28, 93, and 132 each coordinate (6S)-5-formyl-5,6,7,8-tetrahydrofolate. In terms of domain architecture, TrmE-type G spans 228–394 (GVATVLVGSP…LKQQMSNMVA (167 aa)). Residues 238–243 (NAGKST), 257–263 (SHQPGTT), and 282–285 (DTAG) each bind GTP. Positions 242 and 263 each coordinate Mg(2+). K473 contributes to the (6S)-5-formyl-5,6,7,8-tetrahydrofolate binding site.

Belongs to the TRAFAC class TrmE-Era-EngA-EngB-Septin-like GTPase superfamily. TrmE GTPase family. As to quaternary structure, homodimer. Heterotetramer of two MnmE and two MnmG subunits. K(+) serves as cofactor.

It localises to the cytoplasm. Exhibits a very high intrinsic GTPase hydrolysis rate. Involved in the addition of a carboxymethylaminomethyl (cmnm) group at the wobble position (U34) of certain tRNAs, forming tRNA-cmnm(5)s(2)U34. The protein is tRNA modification GTPase MnmE of Chlorobium chlorochromatii (strain CaD3).